Consider the following 456-residue polypeptide: Pantothenate kinase 2, mitochondrial (456 aa).

The segment at 16 to 89 is disordered; the sequence is AGRFGAPMER…TSAGRPRAEG (74 aa). 2 stretches are compositionally biased toward low complexity: residues 28–39 and 55–65; these read RAAATSAAVGES and SSAAPSGSGEA. 3 positions are modified to phosphoserine: Ser-55, Ser-56, and Ser-75. A Nuclear export signal motif is present at residues 154 to 161; sequence LELKDLTL. The Proton acceptor role is filled by Glu-224. Residues Ser-278, Ser-281, and Arg-293 each contribute to the acetyl-CoA site.

It belongs to the type II pantothenate kinase family. Homodimer.

It is found in the cytoplasm. The protein localises to the cytosol. It catalyses the reaction (R)-pantothenate + ATP = (R)-4'-phosphopantothenate + ADP + H(+). Its pathway is cofactor biosynthesis; coenzyme A biosynthesis; CoA from (R)-pantothenate: step 1/5. Its activity is regulated as follows. Inhibited by acetyl-CoA. Inhibited by calcium hopantenate. Activated by palmitoylcarnitine. Catalyzes the phosphorylation of pantothenate to generate 4'-phosphopantothenate in the first and rate-determining step of coenzyme A (CoA) synthesis. The protein is Pantothenate kinase 2, mitochondrial (Pank2) of Mus musculus (Mouse).